The chain runs to 278 residues: MNRITAYIRQSLQDIYPPEEVKALSMLICCDMLGVDALDIYMGKDIILSACKQRELENIIFRLQKNEPIQYIRGYAEFCGRNFRVAPGVLIPRPETAELVDLIVKENPDARRLLDIGTGSGCIAISLDKNLPDAKVDAWDISEEALAIARKNNEELDAQVTFRRQDVFSADGIQGTSYDIIVSNPPYVTETEKTEMEANVLDWEPELALFVPDEDPLRFYRRIAELGRELLRPGGKLYFEINQAYGQDMIRMIEMNQYRDVRVIKDIFGKDRILTANR.

S-adenosyl-L-methionine is bound by residues 117-121 (GTGSG), Asp-140, and Asn-184. 184–187 (NPPY) contributes to the substrate binding site.

This sequence belongs to the protein N5-glutamine methyltransferase family. PrmC subfamily.

It catalyses the reaction L-glutaminyl-[peptide chain release factor] + S-adenosyl-L-methionine = N(5)-methyl-L-glutaminyl-[peptide chain release factor] + S-adenosyl-L-homocysteine + H(+). Functionally, methylates the class 1 translation termination release factors RF1/PrfA and RF2/PrfB on the glutamine residue of the universally conserved GGQ motif. The polypeptide is Release factor glutamine methyltransferase (Bacteroides thetaiotaomicron (strain ATCC 29148 / DSM 2079 / JCM 5827 / CCUG 10774 / NCTC 10582 / VPI-5482 / E50)).